The chain runs to 147 residues: Large ribosomal subunit protein uL15 (147 aa).

Residues methionine 1–valine 46 are disordered. A compositionally biased stretch (basic residues) spans lysine 16–glycine 28.

Belongs to the universal ribosomal protein uL15 family. Part of the 50S ribosomal subunit.

Its function is as follows. Binds to the 23S rRNA. In Mesomycoplasma hyopneumoniae (strain 232) (Mycoplasma hyopneumoniae), this protein is Large ribosomal subunit protein uL15.